We begin with the raw amino-acid sequence, 510 residues long: UDP-N-acetylmuramoylalanine--D-glutamate ligase (510 aa).

138-144 lines the ATP pocket; that stretch reads GTNGKTT. The segment at 294 to 316 is disordered; sequence FDEPAPAPRRKKDAPPPTRAGGR.

The protein belongs to the MurCDEF family.

The protein localises to the cytoplasm. It catalyses the reaction UDP-N-acetyl-alpha-D-muramoyl-L-alanine + D-glutamate + ATP = UDP-N-acetyl-alpha-D-muramoyl-L-alanyl-D-glutamate + ADP + phosphate + H(+). It functions in the pathway cell wall biogenesis; peptidoglycan biosynthesis. Functionally, cell wall formation. Catalyzes the addition of glutamate to the nucleotide precursor UDP-N-acetylmuramoyl-L-alanine (UMA). The protein is UDP-N-acetylmuramoylalanine--D-glutamate ligase of Bordetella pertussis (strain Tohama I / ATCC BAA-589 / NCTC 13251).